The following is a 190-amino-acid chain: UPF0200 protein OE_4442F (190 aa).

8–15 (GMPGSGKS) serves as a coordination point for ATP. A disordered region spans residues 120 to 144 (ARIEDRDRPGDTDGEPLDAREDRER).

It belongs to the UPF0200 family.

The chain is UPF0200 protein OE_4442F from Halobacterium salinarum (strain ATCC 29341 / DSM 671 / R1).